The primary structure comprises 336 residues: MYYPFVRKALFQLDPERAHEFTFQQMRRITGTPLEALLRQKVPSKPVSCMGLTFKNPLGLAAGLDKNGECIDALGALGFGSVEIGTVTPRPQPGNDKPRLFRLVEAEGLINRMGFNNLGVDNLVENVKKAHFDGVLGINIGKNKDTPVEQGKDDYLICMEKVFPYAGYIAINISSPNTPGLRSLQYGDALDDLLAAIKNQQQVLSQKHHKYVPVAVKIAPDLSLEELIQVADSLVRHNIDGVIATNTTLDRSLVQGMKYCDETGGLSGRPLQLKSTEIIRLLSQELQGRLPIIGVGGIDSVIAAREKIAAGASLIQIYSGFIFKGPPLVKEIVTHL.

FMN contacts are provided by residues 62-66 (AGLDK) and T86. A substrate-binding site is contributed by K66. 111–115 (NRMGF) is a substrate binding site. Residues N139 and N172 each coordinate FMN. N172 is a substrate binding site. S175 (nucleophile) is an active-site residue. A substrate-binding site is contributed by N177. K217 and T245 together coordinate FMN. 246 to 247 (NT) contacts substrate. FMN contacts are provided by residues G268, G297, and 318–319 (YS).

This sequence belongs to the dihydroorotate dehydrogenase family. Type 2 subfamily. Monomer. The cofactor is FMN.

It is found in the cell membrane. The enzyme catalyses (S)-dihydroorotate + a quinone = orotate + a quinol. It participates in pyrimidine metabolism; UMP biosynthesis via de novo pathway; orotate from (S)-dihydroorotate (quinone route): step 1/1. Catalyzes the conversion of dihydroorotate to orotate with quinone as electron acceptor. This Cronobacter sakazakii (strain ATCC BAA-894) (Enterobacter sakazakii) protein is Dihydroorotate dehydrogenase (quinone).